A 413-amino-acid polypeptide reads, in one-letter code: uncharacterized protein (413 aa).

A helical membrane pass occupies residues 25-47 (IVNLSALLPLITSTTSTAGSIIT).

The protein localises to the host membrane. This is an uncharacterized protein from Acidianus sp. F28 (AFV-2).